The primary structure comprises 145 residues: Synaptojanin-2-binding protein (145 aa).

The Cytoplasmic segment spans residues 1–117 (MNGRVDYLVT…GPQGEGEPSG (117 aa)). Residues 13–100 (EINLTRGPSG…AVSLRVQHRL (88 aa)) enclose the PDZ domain. The chain crosses the membrane as a helical; Anchor for type IV membrane protein span at residues 118–138 (IPIAMVLVPVFALTMVAAWAF). The Mitochondrial intermembrane portion of the chain corresponds to 139–145 (MRYRQRL).

Binds (via the PDZ domain) to isoform 2A of SYNJ2 (via the unique motif in the C-terminus). Interacts (via C-terminus) with RALBP1. Interacts (via PDZ domain) with ACVR2A (via C-terminus) and ACVR2B (via C-terminus). Forms a ternary complex with ACVR2A and RALBP1. Interacts with MAPK12. Interacts with DLL1; enhances DLL1 protein stability, and promotes notch signaling in endothelial cells.

Its subcellular location is the mitochondrion outer membrane. It is found in the cytoplasm. It localises to the perinuclear region. In terms of biological role, regulates endocytosis of activin type 2 receptor kinases through the Ral/RALBP1-dependent pathway and may be involved in suppression of activin-induced signal transduction. The sequence is that of Synaptojanin-2-binding protein from Bos taurus (Bovine).